We begin with the raw amino-acid sequence, 1752 residues long: MNKKLFIFGLSLFLFLFIFNLSLSLKLSSKNNFYNHNHINNQIHRNNEGNNKLSKLIHLHNDVIDTTISNRDNILFNKKSLNQKSKGSLFLVHLNGPIEKQVHNELIKQLDQLFNGGEIIHYIPDNTYLISMIGSDNNDNNNNNKIELINRLKELIPSIQWLKPLEPRLKISPLFKQNQFQGDNQNEIDQLRIYYHENSNQQSNDIDNIISESSLTLVEKELISNNNNNNNNVLITVNLKNSKLSLESIIYKISTRSLVYWIEPSSSKLIKHTPSNKFAHYSIQSGSASTTSTPIWDVIGIKGDGEIVGCADTGIDINHCFFYDTNPIGSTHRKIISYSSGNGDQIDEIDGHGTHIVGTIIGSTTVDPSVSEFSGGAPNSKVAFVDLQVGSGNGLSIQSNLTAIYQSTYDQNAKVHCDAWNSNIGPFYTGVTEMIDRFQWDHPDFLVVRSAGNNVNFGFNSIYTLSQESTSKNSLVVGSSNQPSSTYLSSIDYWDWDFIYNSIRTSVCTQGQSIYGITCSDVPTQTTSVDIQTQCCSNPILAKICCSTEIQQQYQTNSTVYSEFIPSLFSGVGPTSDGRLKPDLLAPGSPIISSRSLGPSSTINHCSPITSGIATSALIAMEGSSQAAAVATSAAVLVRQYYRDGYFINGKVNSSVGFQPSASLVKATLINTASINVDSTLEYSQGFGNIQLSKLITTTNAQTTSLDIPSSIEKADPIINTGETNSYCFSLDSKADIDITLVWTDPAGSPLSTFTLVNNLDLALLAFVDGELSIYSGNSETIFKNTSQVIFDQLNNVEVIRIKDAPIGSYDVKIFGTNIVIPNQSYSVVIRTSGGTTLMKESECAQCFYDPNDDQSQMCEFDNGIGTQYCKDDNRFSKCVVYECNTGYVFDNGITKSCVTTLALTLYDIVLLGIFGIIIVGAVIFVLVCYKSKSLDQNKYFSLSKDKGGDGNSIRSNSVAGNNNNNNNNNNNNNNNNNNNNNNNNNNNNNNNNNSNGKQSNIELNSVGGGDDGTPNGDDQQQQNNSPQYDEDGRLISGQEVEISIFEVISLGKPESKILGLALFLSFIDVALGLAVPLVAANIFDYLYAGETGKISTTILTFALIIIGMIIVQFLSGILLALAGHRIIARLRREMFASLLKQDMAFFNERKTGELMSRLASDVSSVRSIISDSIPHMIIQIATIGGTLIMLFIISWKLSLVVLCPLPILLVFSKFYGGYIEVISVKVQDALADAATHAAETLFNMKTVRWFSAEEREVAKFSKLISVSYKIALKMTIWNGIYSSTSGIFEQLSVFILLWYGSSLVSNGDLTPSMLIAFNLFLPFITGAVTQVASLYTTYKSYKGSSYRFFEIMQRVPDIQGEGGITRTKVRGDIQFNKVSFAYSSNPDQLVLEKIDIKFEPGTITALIGPSGGGKSTMLSLIGRLYNIDGGSITLDGTNIKDFNVPNLHEHISIVNQEPSLFSGSIAENIMFGKPTATRSEIIEACKQANAHDFITAMPEGYDTLIGERGTALSGGQKQRIAIARTIIKNPTVLLLDETTSELDVESEKLVQDSIDKLVVGRTVIIVAHRLTTILTADIIAVVSDSTISEMGTPEELLAKKGMFYDFVQIQYGKQGEELDIQLPSNSRNTRNADKLRNRSETIKQIAKINNIIPIHRPQRGDDDNEDDENNSGQGSSRSPPPMWRQAKKNANVNKSMLLTRRNTHVQHQSSSGGWQKGNVDDKLQRVLQKSRKKGFMNNQDHKDIKATLVLY.

The N-terminal stretch at 1–24 (MNKKLFIFGLSLFLFLFIFNLSLS) is a signal peptide. The N-linked (GlcNAc...) asparagine glycan is linked to Asn20. The region spanning 280 to 696 (HYSIQSGSAS…FGNIQLSKLI (417 aa)) is the Peptidase S8 domain. Residues Asp312 and His352 each act as charge relay system in the active site. Asn400 and Asn557 each carry an N-linked (GlcNAc...) asparagine glycan. Ser625 acts as the Charge relay system in catalysis. Asn653, Asn785, and Asn823 each carry an N-linked (GlcNAc...) asparagine glycan. Residues 909 to 929 (IVLLGIFGIIIVGAVIFVLVC) form a helical membrane-spanning segment. Positions 946-1032 (DKGGDGNSIR…QNNSPQYDED (87 aa)) are disordered. A compositionally biased stretch (low complexity) spans 962–994 (NNNNNNNNNNNNNNNNNNNNNNNNNNNNNNNNN). Asn993 carries an N-linked (GlcNAc...) asparagine glycan. Positions 995 to 1004 (SNGKQSNIEL) are enriched in polar residues. Positions 1013-1028 (GTPNGDDQQQQNNSPQ) are enriched in low complexity. 6 consecutive transmembrane segments (helical) span residues 1058 to 1078 (ILGL…AVPL), 1102 to 1122 (FALI…LLAL), 1174 to 1194 (IPHM…LFII), 1200 to 1220 (LVVL…GGYI), 1285 to 1305 (TSGI…SSLV), and 1315 to 1335 (LIAF…VASL). Residues 1059–1341 (LGLALFLSFI…VASLYTTYKS (283 aa)) enclose the ABC transmembrane type-1 domain. The 237-residue stretch at 1374–1610 (IQFNKVSFAY…KGMFYDFVQI (237 aa)) folds into the ABC transporter domain. Position 1409–1416 (1409–1416 (GPSGGGKS)) interacts with ATP. The tract at residues 1621 to 1686 (IQLPSNSRNT…SRSPPPMWRQ (66 aa)) is disordered. Residues 1631–1642 (RNADKLRNRSET) show a composition bias toward basic and acidic residues. Asn1638, Asn1670, and Asn1694 each carry an N-linked (GlcNAc...) asparagine glycan.

It in the C-terminal section; belongs to the ABC transporter superfamily. ABCB family. Multidrug resistance exporter (TC 3.A.1.201) subfamily. This sequence in the N-terminal section; belongs to the peptidase S8 family.

The protein localises to the membrane. In terms of biological role, required for a general cell fate determination at the onset of development. Required for the specification of an initial population of prespore cells in which tagA is expressed. Required for normal SDF-2 signaling during spore encapsulation. This Dictyostelium discoideum (Social amoeba) protein is Serine protease/ABC transporter B family protein tagA (tagA).